Reading from the N-terminus, the 388-residue chain is Succinate--CoA ligase [ADP-forming] subunit beta (388 aa).

Residues 9-244 (KELFRTYGIP…TDEEDPLEVE (236 aa)) enclose the ATP-grasp domain. ATP-binding positions include K46, 53–55 (GRG), E99, V102, and E107. The Mg(2+) site is built by N199 and D213. Substrate is bound by residues N264 and 321–323 (GIL).

Belongs to the succinate/malate CoA ligase beta subunit family. As to quaternary structure, heterotetramer of two alpha and two beta subunits. Mg(2+) is required as a cofactor.

It carries out the reaction succinate + ATP + CoA = succinyl-CoA + ADP + phosphate. It catalyses the reaction GTP + succinate + CoA = succinyl-CoA + GDP + phosphate. It functions in the pathway carbohydrate metabolism; tricarboxylic acid cycle; succinate from succinyl-CoA (ligase route): step 1/1. In terms of biological role, succinyl-CoA synthetase functions in the citric acid cycle (TCA), coupling the hydrolysis of succinyl-CoA to the synthesis of either ATP or GTP and thus represents the only step of substrate-level phosphorylation in the TCA. The beta subunit provides nucleotide specificity of the enzyme and binds the substrate succinate, while the binding sites for coenzyme A and phosphate are found in the alpha subunit. The protein is Succinate--CoA ligase [ADP-forming] subunit beta of Desulfosudis oleivorans (strain DSM 6200 / JCM 39069 / Hxd3) (Desulfococcus oleovorans).